Consider the following 332-residue polypeptide: Biotin synthase (332 aa).

The 229-residue stretch at 51-279 (YKVQLASLLS…LSRVRLSAGR (229 aa)) folds into the Radical SAM core domain. Cysteine 66, cysteine 70, and cysteine 73 together coordinate [4Fe-4S] cluster. 4 residues coordinate [2Fe-2S] cluster: cysteine 110, cysteine 142, cysteine 202, and arginine 274.

This sequence belongs to the radical SAM superfamily. Biotin synthase family. In terms of assembly, homodimer. It depends on [4Fe-4S] cluster as a cofactor. [2Fe-2S] cluster serves as cofactor.

It carries out the reaction (4R,5S)-dethiobiotin + (sulfur carrier)-SH + 2 reduced [2Fe-2S]-[ferredoxin] + 2 S-adenosyl-L-methionine = (sulfur carrier)-H + biotin + 2 5'-deoxyadenosine + 2 L-methionine + 2 oxidized [2Fe-2S]-[ferredoxin]. The protein operates within cofactor biosynthesis; biotin biosynthesis; biotin from 7,8-diaminononanoate: step 2/2. Catalyzes the conversion of dethiobiotin (DTB) to biotin by the insertion of a sulfur atom into dethiobiotin via a radical-based mechanism. This Prochlorococcus marinus (strain MIT 9211) protein is Biotin synthase.